Reading from the N-terminus, the 365-residue chain is Tubulin-like protein CetZ (365 aa).

GTP is bound by residues 10 to 14 (QCGGK), 103 to 105 (GTG), E136, N163, and N181.

Belongs to the CetZ family.

The protein resides in the cytoplasm. Functionally, involved in cell shape control. This is Tubulin-like protein CetZ from Pyrococcus abyssi (strain GE5 / Orsay).